The chain runs to 299 residues: MTSKVRKAVIPAAGLGTRFLPATKALAKEMLPIVDKPTIQFIVEEALKSGIEDILVVTGKSKRSIEDHFDSNFELEYNLKEKGKTDLLKLVDKTTDMRLHFIRQTHPRGLGDAVLQAKAFVGNEPFVVMLGDDLMDITDEKAVPLTKQLMDDYERTHASTIAVMPVPHDEVSAYGVIAPQGEGKDGLYSVETFVEKPAPEDAPSDLAIIGRYLLTPEIFEILEKQAPGAGNEIQLTDAIDTLNKTQRVFAREFKGARYDVGDKFGFMKTSIDYALKHPQVKDDLKNYLIQLGKELTEKE.

It belongs to the UDPGP type 2 family.

The catalysed reaction is alpha-D-glucose 1-phosphate + UTP + H(+) = UDP-alpha-D-glucose + diphosphate. It functions in the pathway carbohydrate metabolism; nucleotide-sugar metabolism. Its pathway is capsule biogenesis; capsule polysaccharide biosynthesis. The chain is UTP--glucose-1-phosphate uridylyltransferase (cap4C) from Streptococcus pneumoniae serotype 4 (strain ATCC BAA-334 / TIGR4).